The primary structure comprises 371 residues: Protein RecA (371 aa).

Residue 75–82 (GPESSGKT) coordinates ATP. Residues 343 to 371 (KAKDEPIADEDQPIDVVPNFDDQDVEPQN) form a disordered region.

This sequence belongs to the RecA family.

It localises to the cytoplasm. Functionally, can catalyze the hydrolysis of ATP in the presence of single-stranded DNA, the ATP-dependent uptake of single-stranded DNA by duplex DNA, and the ATP-dependent hybridization of homologous single-stranded DNAs. It interacts with LexA causing its activation and leading to its autocatalytic cleavage. This is Protein RecA from Corynebacterium urealyticum (strain ATCC 43042 / DSM 7109).